A 449-amino-acid polypeptide reads, in one-letter code: Allantoinase (449 aa).

Zn(2+)-binding residues include H61, H63, K148, H184, H240, and D313. N6-carboxylysine is present on K148.

It belongs to the metallo-dependent hydrolases superfamily. Allantoinase family. In terms of assembly, homotetramer. The cofactor is Zn(2+). In terms of processing, carboxylation allows a single lysine to coordinate two zinc ions.

It catalyses the reaction (S)-allantoin + H2O = allantoate + H(+). Its pathway is nitrogen metabolism; (S)-allantoin degradation; allantoate from (S)-allantoin: step 1/1. Catalyzes the conversion of allantoin (5-ureidohydantoin) to allantoic acid by hydrolytic cleavage of the five-member hydantoin ring. This is Allantoinase from Desulfitobacterium hafniense (strain DSM 10664 / DCB-2).